The following is a 448-amino-acid chain: Clusterin (448 aa).

A signal peptide spans Met1–Gly21. Residues Lys77–Lys80 carry the Nuclear localization signal motif. 5 disulfide bridges follow: Cys101–Cys312, Cys112–Cys304, Cys115–Cys301, Cys120–Cys294, and Cys128–Cys284. N-linked (GlcNAc...) asparagine glycosylation is present at Asn102. Phosphoserine is present on Ser132. N-linked (GlcNAc...) asparagine glycans are attached at residues Asn144, Asn290, Asn327, Asn353, and Asn373. Ser395 carries the phosphoserine modification. Residues Arg442–Arg446 carry the Nuclear localization signal motif.

The protein belongs to the clusterin family. Antiparallel disulfide-linked heterodimer of an alpha chain and a beta chain. Self-associates and forms higher oligomers. Interacts with a broad range of misfolded proteins, including APP, APOC2 and LYZ. Slightly acidic pH promotes interaction with misfolded proteins. Forms high-molecular weight oligomers upon interaction with misfolded proteins. Interacts with APOA1, LRP2, CLUAP1 and PON1. Interacts with the complement membrane attack complex. Interacts (via alpha chain) with XRCC6. Interacts with SYVN1, COMMD1, BTRC, CUL1 and with ubiquitin and SCF (SKP1-CUL1-F-box protein) E3 ubiquitin-protein ligase complexes. Interacts (via alpha chain) with BAX in stressed cells, where BAX undergoes a conformation change leading to association with the mitochondrial membrane. Does not interact with BAX in unstressed cells. Found in a complex with LTF, CLU, EPPIN and SEMG1. Interacts (immaturely glycosylated pre-secreted form) with HSPA5; this interaction promotes CLU stability and facilitates stress-induced CLU retrotranslocation from the secretory pathway to the mitochondria, thereby reducing stress-induced apoptosis by stabilizing mitochondrial membrane integrity. Interacts with BCL2L1; this interaction releases and activates BAX and promotes cell death. Interacts with TGFBR2 and ACVR1. Interacts (secreted form) with STMN3; this interaction may act as an important modulator during neuronal differentiation. Interacts with VLDLR and LRP8. Post-translationally, proteolytically cleaved on its way through the secretory system, probably within the Golgi lumen. Proteolytic cleavage is not necessary for its chaperone activity. All non-secreted forms are not proteolytically cleaved. Chaperone activity of uncleaved forms is dependent on a non-reducing environment. Polyubiquitinated, leading to proteasomal degradation. Under cellular stress, the intracellular level of cleaved form is reduced due to proteasomal degradation. In terms of processing, extensively glycosylated with sulfated N-linked carbohydrates. About 30% of the protein mass is comprised of complex N-linked carbohydrate. Endoplasmic reticulum (ER) stress induces changes in glycosylation status and increases level of hypoglycosylated forms. Core carbohydrates are essential for chaperone activity. Non-secreted forms are hypoglycosylated or unglycosylated. As to expression, most abundant in stomach, liver, brain, and testis, with intermediate levels in heart, ovary and kidney.

The protein resides in the secreted. It localises to the nucleus. Its subcellular location is the cytoplasm. The protein localises to the mitochondrion membrane. It is found in the cytosol. The protein resides in the microsome. It localises to the endoplasmic reticulum. Its subcellular location is the mitochondrion. The protein localises to the perinuclear region. It is found in the cytoplasmic vesicle. The protein resides in the secretory vesicle. It localises to the chromaffin granule. In terms of biological role, functions as extracellular chaperone that prevents aggregation of non native proteins. Prevents stress-induced aggregation of blood plasma proteins. Inhibits formation of amyloid fibrils by APP, APOC2, B2M, CALCA, CSN3, SNCA and aggregation-prone LYZ variants (in vitro). Does not require ATP. Maintains partially unfolded proteins in a state appropriate for subsequent refolding by other chaperones, such as HSPA8/HSC70. Does not refold proteins by itself. Binding to cell surface receptors triggers internalization of the chaperone-client complex and subsequent lysosomal or proteasomal degradation. When secreted, protects cells against apoptosis and against cytolysis by complement: inhibits assembly of the complement membrane attack complex (MAC) by preventing polymerization of C9 pore component of the MAC complex. Intracellular forms interact with ubiquitin and SCF (SKP1-CUL1-F-box protein) E3 ubiquitin-protein ligase complexes and promote the ubiquitination and subsequent proteasomal degradation of target proteins. Promotes proteasomal degradation of COMMD1 and IKBKB. Modulates NF-kappa-B transcriptional activity. Following stress, promotes apoptosis. Inhibits apoptosis when associated with the mitochondrial membrane by interference with BAX-dependent release of cytochrome c into the cytoplasm. Plays a role in the regulation of cell proliferation. Following ER stress, suppresses stress-induced apoptosis by stabilizing mitochondrial membrane integrity through interaction with HSPA5. When secreted, does not affect caspase or BAX-mediated intrinsic apoptosis and TNF-induced NF-kappa-B-activity. When secreted, acts as an important modulator during neuronal differentiation through interaction with STMN3. Plays a role in the clearance of immune complexes that arise during cell injury. This is Clusterin from Mus musculus (Mouse).